The primary structure comprises 341 residues: MKALSKLKAEKGIWLVDAPKPEMGHNDLLIKIKKTAICGTDMHIYNWDEWSQKTIPVPMVVGHEYVGEVVDIGQEVRGFKIGDRVSGEGHITCGHCRNCRAGRTHLCRNTSGVGVNREGSFAEYLVIPAFNAFKIPDDISDDLASIFDPFGNAVHTALSFDLVGEDVLITGAGPIGIMAAAVCRHVGARHVVITDVNEYRLELARKMGATRAVNVAQESLKDVMKELGMTEGFDVGLEMSGVPSAFHAMLDTMNHGGKIAMLGIPGGEMAIDWSKVIFKGLVIKGIYGREMFETWYKMASLIQSGLDISPIITHHYKIDDFQKGFDAMGSGQSGKVILSWD.

Cys38 is a binding site for Zn(2+). Catalysis depends on charge relay system residues Thr40 and His43. Zn(2+) contacts are provided by His63, Glu64, Cys93, Cys96, Cys99, and Cys107. NAD(+) contacts are provided by residues Ile175, Asp195, Arg200, 262-264, and 286-287; these read LGI and IY.

This sequence belongs to the zinc-containing alcohol dehydrogenase family. Homotetramer. Zn(2+) serves as cofactor.

Its subcellular location is the cytoplasm. The enzyme catalyses L-threonine + NAD(+) = (2S)-2-amino-3-oxobutanoate + NADH + H(+). Its pathway is amino-acid degradation; L-threonine degradation via oxydo-reductase pathway; glycine from L-threonine: step 1/2. Functionally, catalyzes the NAD(+)-dependent oxidation of L-threonine to 2-amino-3-ketobutyrate. The protein is L-threonine 3-dehydrogenase of Shewanella sp. (strain ANA-3).